The primary structure comprises 249 residues: 2,3-bisphosphoglycerate-dependent phosphoglycerate mutase (249 aa).

Substrate is bound by residues 9–16 (RHGQSQWN), 22–23 (TG), Arg61, 88–91 (ERHY), Lys99, 115–116 (RR), and 184–185 (GN). Catalysis depends on His10, which acts as the Tele-phosphohistidine intermediate. The Proton donor/acceptor role is filled by Glu88.

This sequence belongs to the phosphoglycerate mutase family. BPG-dependent PGAM subfamily. As to quaternary structure, homodimer.

The enzyme catalyses (2R)-2-phosphoglycerate = (2R)-3-phosphoglycerate. The protein operates within carbohydrate degradation; glycolysis; pyruvate from D-glyceraldehyde 3-phosphate: step 3/5. In terms of biological role, catalyzes the interconversion of 2-phosphoglycerate and 3-phosphoglycerate. The polypeptide is 2,3-bisphosphoglycerate-dependent phosphoglycerate mutase (Xanthomonas euvesicatoria pv. vesicatoria (strain 85-10) (Xanthomonas campestris pv. vesicatoria)).